A 199-amino-acid polypeptide reads, in one-letter code: Recombination protein RecR (199 aa).

Residues 57–72 form a C4-type zinc finger; the sequence is CEKCNNFTEEVVCELC. The region spanning 80 to 175 is the Toprim domain; the sequence is ALLCVVEMPA…KITRIARGLP (96 aa).

Belongs to the RecR family.

In terms of biological role, may play a role in DNA repair. It seems to be involved in an RecBC-independent recombinational process of DNA repair. It may act with RecF and RecO. The sequence is that of Recombination protein RecR from Nitrosospira multiformis (strain ATCC 25196 / NCIMB 11849 / C 71).